Consider the following 94-residue polypeptide: uncharacterized protein (94 aa).

Residues Ile-13–Phe-33 traverse the membrane as a helical segment.

The protein resides in the membrane. This is an uncharacterized protein from Dictyostelium discoideum (Social amoeba).